A 349-amino-acid chain; its full sequence is Sphingomyelinase D (349 aa).

A signal peptide spans 1–18 (MLLSSLISLALLSSQVVA). The active site involves His52. Mg(2+)-binding residues include Glu72, Asp74, and Asp123. Positions 310–317 (ATNDNNPW) match the SMD-tail motif.

It belongs to the sphingomyelinase D/phospholipase D family. The cofactor is Mg(2+).

It is found in the secreted. It carries out the reaction a sphingomyelin + H2O = an N-acylsphing-4-enine 1-phosphate + choline + H(+). Functionally, catalyzes the hydrolysis of sphingomyelin. Sphingomyelinases D are produced by some spider in their venoms, but also by arthropods such as ticks, or pathogenic bacteria and fungi. They might play a role in pathogenicity through different mechanisms, such as membrane destabilization and host cell penetration, but also pulmonary inflammation and cutaneous lesions. The protein is Sphingomyelinase D of Uncinocarpus reesii (strain UAMH 1704).